A 173-amino-acid polypeptide reads, in one-letter code: Thiol-disulfide oxidoreductase ResA (173 aa).

Residues 10-29 (VIILLILCGAVGFTLYQGFF) form a helical; Signal-anchor for type II membrane protein membrane-spanning segment. One can recognise a Thioredoxin domain in the interval 35 to 173 (MQIGKEAPNF…LEGYLQKITP (139 aa)). The cysteines at positions 73 and 76 are disulfide-linked.

This sequence belongs to the thioredoxin family. ResA subfamily.

The protein resides in the cell membrane. It functions in the pathway protein modification; cytochrome c assembly. Thiol-disulfide oxidoreductase which is required in disulfide reduction during c-type cytochrome synthesis. May accept reducing equivalents from CcdA, leading to breakage of disulfide bonds in apocytochrome c; following this reduction heme can be covalently attached. The chain is Thiol-disulfide oxidoreductase ResA from Bacillus cereus (strain ZK / E33L).